A 453-amino-acid polypeptide reads, in one-letter code: Pentatricopeptide repeat-containing protein At2g38420, mitochondrial (453 aa).

A mitochondrion-targeting transit peptide spans 1–77; the sequence is MARSSSWHRM…CEPTPQAYRF (77 aa). 9 PPR repeats span residues 107–141, 142–177, 178–212, 213–249, 250–284, 285–319, 320–354, 355–389, and 390–424; these read PESI…RCVP, SAYT…GVRL, EEST…SVIV, DPRL…RFSP, GLRD…RVEP, DLVC…GLAP, DVYT…GSEP, NVVT…GVNR, and NSHT…NVFV.

Belongs to the PPR family. P subfamily.

Its subcellular location is the mitochondrion. The chain is Pentatricopeptide repeat-containing protein At2g38420, mitochondrial from Arabidopsis thaliana (Mouse-ear cress).